The primary structure comprises 373 residues: Diels-Alderase (373 aa).

Belongs to the Diels-Alderase family.

It catalyses the reaction (5S)-3-[(2E,6R,8E,10E,12E)-2,6-dimethyltetradeca-2,8,10,12-tetraenoyl]-5-(hydroxymethyl)pyrrolidine-2,4-dione = trichosetin. It functions in the pathway mycotoxin biosynthesis. In terms of biological role, hybrid PKS-NRPS synthetase; part of the gene cluster that mediates the biosynthesis of trichosetin, a trans-fused decalin-containing tetramic acid with antimicrobial activity. The PKS module of PKS-NRPS1 together with the enoylreductase (ER) catalyze the formation of the polyketide unit which is then conjugated to L-serine by the condensation domain of the PKS-NRPS1 NRPS module. Activity of the Dieckmann cyclase domain (RED) results in release of the Dieckmann product intermediate. Diels-Alderase (DA) is involved in endo-selective Diels-Alder cycloaddition to form the decalin ring, leading to the production of N-desmethylequisetin also called trichosetin. The cluster does not contain the equisetin N-methyltransferase and consequently, trichosetin is isolated as final product. This Gibberella fujikuroi (strain CBS 195.34 / IMI 58289 / NRRL A-6831) (Bakanae and foot rot disease fungus) protein is Diels-Alderase.